The sequence spans 150 residues: Azurin (150 aa).

The signal sequence occupies residues 1–21 (MFKQVLGGMALMAAFSAPVLA). The Plastocyanin-like domain maps to 22–150 (AECSVDIAGT…LMKGTLKLVD (129 aa)). A disulfide bridge connects residues Cys24 and Cys47. 4 residues coordinate Cu cation: His67, Cys133, His138, and Met142.

The protein resides in the periplasm. The sequence is that of Azurin from Bordetella bronchiseptica (strain ATCC BAA-588 / NCTC 13252 / RB50) (Alcaligenes bronchisepticus).